The following is a 285-amino-acid chain: Isoprenyl transferase 2 (285 aa).

Positions 11-30 (RREYRAPEPHPSGARAPKLP) are disordered. Asp43 is a catalytic residue. Asp43 provides a ligand contact to Mg(2+). Residues 44–47 (GNGR), Trp48, Arg56, His60, and 88–90 (STE) each bind substrate. Residue Asn91 is the Proton acceptor of the active site. Substrate is bound by residues Trp92, Arg94, Arg211, and 217–219 (RTS). Glu230 contributes to the Mg(2+) binding site.

It belongs to the UPP synthase family. In terms of assembly, homodimer. Mg(2+) serves as cofactor.

In terms of biological role, catalyzes the condensation of isopentenyl diphosphate (IPP) with allylic pyrophosphates generating different type of terpenoids. This chain is Isoprenyl transferase 2, found in Streptomyces avermitilis (strain ATCC 31267 / DSM 46492 / JCM 5070 / NBRC 14893 / NCIMB 12804 / NRRL 8165 / MA-4680).